The following is a 161-amino-acid chain: Copper transporter 1 (161 aa).

A run of 2 helical transmembrane segments spans residues 55–75 (GGMYALALIFVFALAVIVEFL) and 109–129 (VAYLLMLALMSFNGGVFLVAV).

It belongs to the copper transporter (Ctr) (TC 1.A.56) family. SLC31A subfamily. As to quaternary structure, self-interacts. Interacts with SWEET11 and COPT2.

The protein localises to the cell membrane. Involved in the transport of copper, in cooperation with SWEET11 and COPT2. Contributes to the removal of copper (Cu) from xylem, and thus to the sensitivity toward bacterial pathogens such as X.oryzae pv. oryzae (Xoo). In Oryza sativa subsp. japonica (Rice), this protein is Copper transporter 1 (COPT1).